The sequence spans 451 residues: uncharacterized protein (451 aa).

The tract at residues 415–435 (AHGDTEWLPPPHLDHGQPRVN) is disordered.

The protein belongs to the Rv1128c/1148c/1588c/1702c/1945/3466 family.

This is an uncharacterized protein from Mycobacterium tuberculosis (strain ATCC 25618 / H37Rv).